Reading from the N-terminus, the 128-residue chain is Large ribosomal subunit protein uL22 (128 aa).

This sequence belongs to the universal ribosomal protein uL22 family. Part of the 50S ribosomal subunit.

Functionally, this protein binds specifically to 23S rRNA; its binding is stimulated by other ribosomal proteins, e.g. L4, L17, and L20. It is important during the early stages of 50S assembly. It makes multiple contacts with different domains of the 23S rRNA in the assembled 50S subunit and ribosome. Its function is as follows. The globular domain of the protein is located near the polypeptide exit tunnel on the outside of the subunit, while an extended beta-hairpin is found that lines the wall of the exit tunnel in the center of the 70S ribosome. In Prochlorococcus marinus subsp. pastoris (strain CCMP1986 / NIES-2087 / MED4), this protein is Large ribosomal subunit protein uL22.